The primary structure comprises 363 residues: 3-isopropylmalate dehydrogenase (363 aa).

Residue 78 to 91 coordinates NAD(+); sequence GPKWEHLPPDQQPE. Substrate contacts are provided by R99, R109, R138, and D227. Mg(2+) contacts are provided by D227, D251, and D255. 285 to 297 contacts NAD(+); that stretch reads GSAPDIAGKNIAN.

This sequence belongs to the isocitrate and isopropylmalate dehydrogenases family. LeuB type 1 subfamily. In terms of assembly, homodimer. Requires Mg(2+) as cofactor. Mn(2+) serves as cofactor.

The protein localises to the cytoplasm. The catalysed reaction is (2R,3S)-3-isopropylmalate + NAD(+) = 4-methyl-2-oxopentanoate + CO2 + NADH. It participates in amino-acid biosynthesis; L-leucine biosynthesis; L-leucine from 3-methyl-2-oxobutanoate: step 3/4. Catalyzes the oxidation of 3-carboxy-2-hydroxy-4-methylpentanoate (3-isopropylmalate) to 3-carboxy-4-methyl-2-oxopentanoate. The product decarboxylates to 4-methyl-2 oxopentanoate. The polypeptide is 3-isopropylmalate dehydrogenase (Shigella sonnei (strain Ss046)).